A 211-amino-acid chain; its full sequence is UPF0637 protein ABC2405 (211 aa).

Belongs to the UPF0637 family.

The polypeptide is UPF0637 protein ABC2405 (Shouchella clausii (strain KSM-K16) (Alkalihalobacillus clausii)).